We begin with the raw amino-acid sequence, 390 residues long: Succinyl-diaminopimelate desuccinylase (390 aa).

H74 is a Zn(2+) binding site. D76 is a catalytic residue. Residue D107 coordinates Zn(2+). E140 serves as the catalytic Proton acceptor. Positions 141, 169, and 363 each coordinate Zn(2+).

This sequence belongs to the peptidase M20A family. DapE subfamily. In terms of assembly, homodimer. It depends on Zn(2+) as a cofactor. Co(2+) serves as cofactor.

It catalyses the reaction N-succinyl-(2S,6S)-2,6-diaminopimelate + H2O = (2S,6S)-2,6-diaminopimelate + succinate. Its pathway is amino-acid biosynthesis; L-lysine biosynthesis via DAP pathway; LL-2,6-diaminopimelate from (S)-tetrahydrodipicolinate (succinylase route): step 3/3. Functionally, catalyzes the hydrolysis of N-succinyl-L,L-diaminopimelic acid (SDAP), forming succinate and LL-2,6-diaminopimelate (DAP), an intermediate involved in the bacterial biosynthesis of lysine and meso-diaminopimelic acid, an essential component of bacterial cell walls. The protein is Succinyl-diaminopimelate desuccinylase of Bartonella henselae (strain ATCC 49882 / DSM 28221 / CCUG 30454 / Houston 1) (Rochalimaea henselae).